Consider the following 337-residue polypeptide: Glyceraldehyde-3-phosphate dehydrogenase 1, cytosolic (337 aa).

Residues 13–14 (RI), D35, and R82 each bind NAD(+). Residues 153 to 155 (SCT), T184, 213 to 214 (TG), and R236 contribute to the D-glyceraldehyde 3-phosphate site. C154 functions as the Nucleophile in the catalytic mechanism. N318 provides a ligand contact to NAD(+).

Belongs to the glyceraldehyde-3-phosphate dehydrogenase family. As to quaternary structure, homotetramer. In terms of processing, phosphorylated after gibberellin treatment.

The protein localises to the cytoplasm. The enzyme catalyses D-glyceraldehyde 3-phosphate + phosphate + NAD(+) = (2R)-3-phospho-glyceroyl phosphate + NADH + H(+). It participates in carbohydrate degradation; glycolysis; pyruvate from D-glyceraldehyde 3-phosphate: step 1/5. Key enzyme in glycolysis that catalyzes the first step of the pathway by converting D-glyceraldehyde 3-phosphate (G3P) into 3-phospho-D-glyceroyl phosphate. Essential for the maintenance of cellular ATP levels and carbohydrate metabolism. The polypeptide is Glyceraldehyde-3-phosphate dehydrogenase 1, cytosolic (GAPC1) (Oryza sativa subsp. japonica (Rice)).